The following is a 638-amino-acid chain: Probable beta-glucosidase C (638 aa).

An N-terminal signal peptide occupies residues 1-18 (MKVLAPGYLAEASLTALA). N-linked (GlcNAc...) asparagine glycans are attached at residues N40, N94, N116, N223, and N274. D341 is a catalytic residue. N364, N480, N488, and N528 each carry an N-linked (GlcNAc...) asparagine glycan.

The protein belongs to the glycosyl hydrolase 3 family.

It localises to the secreted. The enzyme catalyses Hydrolysis of terminal, non-reducing beta-D-glucosyl residues with release of beta-D-glucose.. Its pathway is glycan metabolism; cellulose degradation. Beta-glucosidases are one of a number of cellulolytic enzymes involved in the degradation of cellulosic biomass. Catalyzes the last step releasing glucose from the inhibitory cellobiose. This Aspergillus oryzae (strain ATCC 42149 / RIB 40) (Yellow koji mold) protein is Probable beta-glucosidase C (bglC).